Reading from the N-terminus, the 1000-residue chain is Integrin alpha-PS5 (1000 aa).

FG-GAP repeat units lie at residues 15 to 74, 75 to 137, 145 to 198, 199 to 261, 262 to 323, 324 to 379, and 386 to 448; these read KHLK…GSCS, HYVL…DTPP, SLIP…AAQG, SYAV…GEIV, RKLH…FKFE, KKII…GLRD, and DAPS…SESR. N58 is a glycosylation site (N-linked (GlcNAc...) asparagine). N231 carries an N-linked (GlcNAc...) asparagine glycan. N516, N592, N622, N732, N771, N829, N842, N853, and N922 each carry an N-linked (GlcNAc...) asparagine glycan. A helical transmembrane segment spans residues 930–950; that stretch reads IWYIILSLIAGHLLLGAMTYI. Topologically, residues 951 to 1000 are cytoplasmic; the sequence is LYKLRFFKRGKKEELKRLLEEHRSETKEPATDCEGNQEEINVEMHSDLEN. Basic and acidic residues predominate over residues 971 to 980; it reads EHRSETKEPA. A disordered region spans residues 971 to 1000; that stretch reads EHRSETKEPATDCEGNQEEINVEMHSDLEN.

Belongs to the integrin alpha chain family. Heterodimer of an alpha and a beta subunit. Alpha-PS5 associates with beta-PS. Expressed in all follicle cells overlying the oocyte during mid-oogenesis, the strongest expression is observed in the cells covering the anterior end of the oocyte and in the cells forming the dorsal appendages. After completion of oocyte enlargement, expression in main body follicle cells is down-regulated but persists strongly in the dorsal appendage forming cells. Expressed in lamellocytes.

Its subcellular location is the membrane. In terms of biological role, possible role in cell-cell interactions. Minor involvement in the establishment of the oocyte anterior-posterior length. In Drosophila melanogaster (Fruit fly), this protein is Integrin alpha-PS5.